The sequence spans 1172 residues: WD repeat-containing protein 48 homolog (1172 aa).

Residues 1-115 form a disordered region; sequence MYEYYSTGKI…HSYGGGGGGT (115 aa). The span at 13–36 shows a compositional bias: polar residues; the sequence is LPQQVDSNGINSKPMNSSPSTPIP. The segment covering 37–63 has biased composition (low complexity); it reads NNNNNNNNNNNNNNNNNNNNNNNNNNN. The span at 64–89 shows a compositional bias: polar residues; sequence RNKSQQSFYLNNNNRNCGFSSPTKPQ. Positions 90-107 are enriched in low complexity; that stretch reads YNNNNNNNNNNNSNYNHS. 7 WD repeats span residues 152–202, 208–246, 249–548, 560–599, 602–641, 645–683, and 686–727; these read RHCF…GFKF, DHTD…CVNS, FHDD…SPMF, GEGI…KIFK, GHTD…CIQV, LHTD…QSRL, and RENE…NQSI. Positions 341–365 are enriched in low complexity; that stretch reads ISTNNNNNNSSSSNNNNNNNNNNNN. The segment at 341 to 544 is disordered; it reads ISTNNNNNNS…NDNNNLNKKF (204 aa). 3 stretches are compositionally biased toward polar residues: residues 366–377, 388–408, and 417–434; these read GQTNTHENTAET, QLSS…NFRN, and PPSS…SNGR. Residues 435-485 are compositionally biased toward low complexity; sequence NVNNRENNNNNNNNNNNNNNNNNNNNNNNNNNNNNNNNNINNNNHENNGNV. The span at 486–503 shows a compositional bias: acidic residues; the sequence is DVDDEDDDDDDDDDDDDD. Residues 504 to 513 show a composition bias toward basic and acidic residues; the sequence is CNKNKKKYDD. The span at 514-543 shows a compositional bias: low complexity; sequence NNNNNNYNNNNNKKNNSNDNNNDNNNLNKK. Low complexity predominate over residues 745–769; the sequence is NNNNNNNNNNNNNNNNNNNNNNNNN. The disordered stretch occupies residues 745–775; that stretch reads NNNNNNNNNNNNNNNNNNNNNNNNNNREKLS. Residues 794 to 833 form a WD 8 repeat; it reads QGRAGIIKNQVLNNRRQVLTKDNDNNVQLWDITKGKEIES. The interval 926–986 is disordered; it reads ELNHSNDSVN…TNSTTPNSGR (61 aa). The span at 930–984 shows a compositional bias: low complexity; it reads SNDSVNSSLSSNTSGDNNNNNYNNYNNYNNNNNNGLQKSSSSSSIVSTNSTTPNS.

Belongs to the WD repeat WDR48 family.

This is WD repeat-containing protein 48 homolog from Dictyostelium discoideum (Social amoeba).